Reading from the N-terminus, the 413-residue chain is Glycylpeptide N-tetradecanoyltransferase (413 aa).

Tetradecanoyl-CoA is bound by residues Phe-34, Trp-35, Phe-163, Leu-164, Cys-165, Val-166, Arg-174, Leu-175, and Ala-176.

It belongs to the NMT family.

Its subcellular location is the cytoplasm. It carries out the reaction N-terminal glycyl-[protein] + tetradecanoyl-CoA = N-tetradecanoylglycyl-[protein] + CoA + H(+). In terms of biological role, adds a myristoyl group to the N-terminal glycine residue of certain cellular proteins. This chain is Glycylpeptide N-tetradecanoyltransferase (nmt), found in Dictyostelium discoideum (Social amoeba).